Consider the following 111-residue polypeptide: Transcription initiation factor IIA subunit 2 (111 aa).

Belongs to the TFIIA subunit 2 family. As to quaternary structure, TFIIA is a heterodimer of the large unprocessed subunit 1 and a small subunit gamma. It was originally believed to be a heterotrimer of an alpha, a beta and a gamma subunit. Interacts with NCOA6 general coactivator. TFIIA forms a complex with TBP.

Its subcellular location is the nucleus. TFIIA is a component of the transcription machinery of RNA polymerase II and plays an important role in transcriptional activation. TFIIA in a complex with TBP mediates transcriptional activity. The protein is Transcription initiation factor IIA subunit 2 (gtf2a2) of Paralichthys olivaceus (Bastard halibut).